Here is a 317-residue protein sequence, read N- to C-terminus: MGEVQREKVAVIIGPTAVGKTKLSIDLAKALNGEIISGDSMQIYRTMDIGTAKVTKEEMDGIPHYMVDIKNPEESFSVAEFQERVRKHIREITERGKLPIIVGGTGLYIQSVLFDYQFTDDAGDAIYREQMEKLALERGVEYVHKKLQEVDPESAERIHANNVRRVIRALEIFHTSGEKMSDQLEKQENELLYDVSLIGLTMDREMLYDRINLRVDIMMDQGLLEEVEGLYNRGIRDCQSIQAIGYKEIYDYFEDRVSLEEAVSQLKTNSRRYAKRQLTWFRNKMDVTWFDVTDGEKTSEILRYIEGKLQLKSNNSK.

Gly-14 to Thr-21 is a binding site for ATP. Residue Thr-16–Thr-21 participates in substrate binding. The interval Asp-39 to Gln-42 is interaction with substrate tRNA.

Belongs to the IPP transferase family. As to quaternary structure, monomer. It depends on Mg(2+) as a cofactor.

It catalyses the reaction adenosine(37) in tRNA + dimethylallyl diphosphate = N(6)-dimethylallyladenosine(37) in tRNA + diphosphate. Functionally, catalyzes the transfer of a dimethylallyl group onto the adenine at position 37 in tRNAs that read codons beginning with uridine, leading to the formation of N6-(dimethylallyl)adenosine (i(6)A). This is tRNA dimethylallyltransferase from Bacillus thuringiensis subsp. konkukian (strain 97-27).